The sequence spans 122 residues: Insulin-like growth factor 1 (122 aa).

The tract at residues 49 to 77 (GPETLCGAELVDALQFVCGDRGFYFNKPT) is b. 3 cysteine pairs are disulfide-bonded: Cys54-Cys96, Cys66-Cys109, and Cys95-Cys100. Residues 78-89 (GYGSSSRRAPQT) form a c region. An a region spans residues 90-110 (GIVDECCFRSCDLRRLEMYCA). A d region spans residues 111-118 (PLKPAKSA). Residues 119–122 (RSVR) constitute a propeptide, e peptide.

The protein belongs to the insulin family. As to quaternary structure, forms a ternary complex with IGFR1 and ITGAV:ITGB3. Forms a ternary complex with IGFR1 and ITGA6:ITGB4. Forms a ternary complex with IGFBP3 and ALS.

It is found in the secreted. Its function is as follows. The insulin-like growth factors, isolated from plasma, are structurally and functionally related to insulin but have a much higher growth-promoting activity. May be a physiological regulator of [1-14C]-2-deoxy-D-glucose (2DG) transport and glycogen synthesis in osteoblasts. Stimulates glucose transport in bone-derived osteoblastic (PyMS) cells and is effective at much lower concentrations than insulin, not only regarding glycogen and DNA synthesis but also with regard to enhancing glucose uptake. May play a role in synapse maturation. Ca(2+)-dependent exocytosis of IGF1 is required for sensory perception of smell in the olfactory bulb. Acts as a ligand for IGF1R. Binds to the alpha subunit of IGF1R, leading to the activation of the intrinsic tyrosine kinase activity which autophosphorylates tyrosine residues in the beta subunit thus initiating a cascade of down-stream signaling events leading to activation of the PI3K-AKT/PKB and the Ras-MAPK pathways. Binds to integrins ITGAV:ITGB3 and ITGA6:ITGB4. Its binding to integrins and subsequent ternary complex formation with integrins and IGFR1 are essential for IGF1 signaling. Induces the phosphorylation and activation of IGFR1, MAPK3/ERK1, MAPK1/ERK2 and AKT1. As part of the MAPK/ERK signaling pathway, acts as a negative regulator of apoptosis in cardiomyocytes via promotion of STUB1/CHIP-mediated ubiquitination and degradation of ICER-type isoforms of CREM. The polypeptide is Insulin-like growth factor 1 (Equus caballus (Horse)).